A 65-amino-acid chain; its full sequence is Large ribosomal subunit protein uL30 (65 aa).

It belongs to the universal ribosomal protein uL30 family. As to quaternary structure, part of the 50S ribosomal subunit.

This is Large ribosomal subunit protein uL30 from Desulfosudis oleivorans (strain DSM 6200 / JCM 39069 / Hxd3) (Desulfococcus oleovorans).